A 154-amino-acid chain; its full sequence is Cyanate hydratase (154 aa).

Active-site residues include Arg100, Glu103, and Ser126.

It belongs to the cyanase family.

The catalysed reaction is cyanate + hydrogencarbonate + 3 H(+) = NH4(+) + 2 CO2. Catalyzes the reaction of cyanate with bicarbonate to produce ammonia and carbon dioxide. The chain is Cyanate hydratase from Aspergillus fumigatus (strain ATCC MYA-4609 / CBS 101355 / FGSC A1100 / Af293) (Neosartorya fumigata).